Reading from the N-terminus, the 418-residue chain is Deubiquitinase and deneddylase Dub1 (418 aa).

Polar residues predominate over residues 1-10 (MLSPTNSISK). A disordered region spans residues 1 to 23 (MLSPTNSISKTVPAPPQDSSKPV). The chain crosses the membrane as a helical span at residues 40 to 60 (TALAVLLVVVTLGLILLFYSF). The tract at residues 75 to 145 (STKEHPTISI…LPPKAPKPVK (71 aa)) is disordered. Residues 86–141 (EPLPSPPLAVPRPSTPPPPVISRPSTPPAPTPAISPPSTPSAPKPSTPPPLPPKAP) are compositionally biased toward pro residues. Active-site residues include His-288, Asp-305, and Cys-358.

This sequence belongs to the peptidase C48 family.

The protein resides in the secreted. It is found in the host cell. The protein localises to the membrane. Its function is as follows. Effector proteins function to alter host cell physiology and promote bacterial survival in host tissues. This protease possesses deubiquitinating and deneddylating activities. The polypeptide is Deubiquitinase and deneddylase Dub1 (cdu1) (Chlamydia trachomatis serovar A (strain ATCC VR-571B / DSM 19440 / HAR-13)).